A 322-amino-acid polypeptide reads, in one-letter code: uncharacterized protein (322 aa).

This sequence to M.jannaschii MJ0640 and MJ0799.

This is an uncharacterized protein from Synechocystis sp. (strain ATCC 27184 / PCC 6803 / Kazusa).